The primary structure comprises 402 residues: UDP-N-acetylmuramoylalanine--D-glutamate ligase (402 aa).

97–103 is a binding site for ATP; it reads GTNGKTT.

The protein belongs to the MurCDEF family.

It localises to the cytoplasm. The catalysed reaction is UDP-N-acetyl-alpha-D-muramoyl-L-alanine + D-glutamate + ATP = UDP-N-acetyl-alpha-D-muramoyl-L-alanyl-D-glutamate + ADP + phosphate + H(+). Its pathway is cell wall biogenesis; peptidoglycan biosynthesis. Its function is as follows. Cell wall formation. Catalyzes the addition of glutamate to the nucleotide precursor UDP-N-acetylmuramoyl-L-alanine (UMA). The sequence is that of UDP-N-acetylmuramoylalanine--D-glutamate ligase from Campylobacter jejuni subsp. jejuni serotype O:23/36 (strain 81-176).